The sequence spans 238 residues: Ribosomal RNA small subunit methyltransferase G (238 aa).

Residues Gly-77, Phe-82, 128 to 129, and Arg-147 each bind S-adenosyl-L-methionine; that span reads AE.

It belongs to the methyltransferase superfamily. RNA methyltransferase RsmG family.

The protein resides in the cytoplasm. In terms of biological role, specifically methylates the N7 position of guanine in position 535 of 16S rRNA. This chain is Ribosomal RNA small subunit methyltransferase G, found in Listeria monocytogenes serotype 4b (strain F2365).